The chain runs to 538 residues: MEIERESSERGSISWRASAAHDQDAKKLDADDQLLMKEPAWKRFLAHVGPGFMVSLAYLDPGNLETDLQAGANHRYELLWVILIGLIFALIIQSLAANLGVVTGRHLAEICKSEYPKFVKIFLWLLAELAVIAADIPEVIGTAFAFNILFHIPVWVGVLITGTSTLLLLGLQKYGVRKLEFLISMLVFVMAACFFGELSIVKPPAKEVMKGLFIPRLNGDGATADAIALLGALVMPHNLFLHSALVLSRKTPASVRGIKDGCRFFLYESGFALFVALLINIAVVSVSGTACSSANLSQEDADKCANLSLDTSSFLLKNVLGKSSAIVYGVALLASGQSSTITGTYAGQYIMQGFLDIRMRKWLRNLMTRTIAIAPSLIVSIIGGSRGAGRLIIIASMILSFELPFALIPLLKFSSSKSKMGPHKNSIYIIVFSWFLGLLIIGINMYFLSTSFVGWLIHNDLPKYANVLVGAAVFPFMLVYIVAVVYLTIRKDSVVTFVADSSLAAVVDAEKADAGDLAVDDDEPLPYRDDLADIPLPR.

The next 12 helical transmembrane spans lie at phenylalanine 44 to leucine 64, glutamate 77 to alanine 97, phenylalanine 118 to glutamate 138, isoleucine 140 to isoleucine 160, phenylalanine 181 to valine 201, isoleucine 227 to leucine 247, phenylalanine 264 to valine 284, serine 324 to alanine 346, asparagine 365 to serine 385, leucine 391 to leucine 411, isoleucine 427 to phenylalanine 447, and valine 467 to leucine 487. Positions alanine 518–arginine 538 are disordered.

The protein belongs to the NRAMP (TC 2.A.55) family.

It localises to the membrane. Functionally, probable metal transporter. This is Metal transporter Nramp5 (NRAMP5) from Oryza sativa subsp. japonica (Rice).